We begin with the raw amino-acid sequence, 213 residues long: tRNA (guanine-N(7)-)-methyltransferase (213 aa).

Residues Glu44, Glu69, Asp96, and Asp118 each contribute to the S-adenosyl-L-methionine site. Asp118 is a catalytic residue. Residues Lys122, Asp154, and 191-194 (TEYE) contribute to the substrate site.

Belongs to the class I-like SAM-binding methyltransferase superfamily. TrmB family.

The enzyme catalyses guanosine(46) in tRNA + S-adenosyl-L-methionine = N(7)-methylguanosine(46) in tRNA + S-adenosyl-L-homocysteine. It functions in the pathway tRNA modification; N(7)-methylguanine-tRNA biosynthesis. Its function is as follows. Catalyzes the formation of N(7)-methylguanine at position 46 (m7G46) in tRNA. This is tRNA (guanine-N(7)-)-methyltransferase from Exiguobacterium sibiricum (strain DSM 17290 / CCUG 55495 / CIP 109462 / JCM 13490 / 255-15).